The chain runs to 248 residues: Probable transcriptional regulatory protein RHOS4_22610 (248 aa).

Residues 1 to 21 (MAGHSKWANIQHRKGKQDKLR) are disordered.

It belongs to the TACO1 family.

The protein resides in the cytoplasm. This chain is Probable transcriptional regulatory protein RHOS4_22610, found in Cereibacter sphaeroides (strain ATCC 17023 / DSM 158 / JCM 6121 / CCUG 31486 / LMG 2827 / NBRC 12203 / NCIMB 8253 / ATH 2.4.1.) (Rhodobacter sphaeroides).